The sequence spans 217 residues: Large ribosomal subunit protein uL4 (217 aa).

The segment at R42–Q100 is disordered.

Belongs to the universal ribosomal protein uL4 family. In terms of assembly, part of the 50S ribosomal subunit.

Functionally, one of the primary rRNA binding proteins, this protein initially binds near the 5'-end of the 23S rRNA. It is important during the early stages of 50S assembly. It makes multiple contacts with different domains of the 23S rRNA in the assembled 50S subunit and ribosome. In terms of biological role, forms part of the polypeptide exit tunnel. This is Large ribosomal subunit protein uL4 from Mycolicibacterium paratuberculosis (strain ATCC BAA-968 / K-10) (Mycobacterium paratuberculosis).